Here is a 350-residue protein sequence, read N- to C-terminus: Dihydroorotate dehydrogenase (quinone) (350 aa).

Residues 67-71 and Gly-91 contribute to the FMN site; that span reads AGFDK. Lys-71 is a binding site for substrate. A substrate-binding site is contributed by 116-120; the sequence is NRMGL. 2 residues coordinate FMN: Asn-144 and Asn-177. Asn-177 lines the substrate pocket. Residue Cys-180 is the Nucleophile of the active site. Asn-182 is a binding site for substrate. 2 residues coordinate FMN: Lys-213 and Thr-241. 242–243 serves as a coordination point for substrate; it reads NT. The tract at residues 245 to 265 is disordered; the sequence is TERPASLRSPNAVETGGLSGK. Residues Gly-264, Gly-291, and 312 to 313 contribute to the FMN site; that span reads YT.

It belongs to the dihydroorotate dehydrogenase family. Type 2 subfamily. As to quaternary structure, monomer. FMN is required as a cofactor.

It is found in the cell membrane. The catalysed reaction is (S)-dihydroorotate + a quinone = orotate + a quinol. The protein operates within pyrimidine metabolism; UMP biosynthesis via de novo pathway; orotate from (S)-dihydroorotate (quinone route): step 1/1. Functionally, catalyzes the conversion of dihydroorotate to orotate with quinone as electron acceptor. This chain is Dihydroorotate dehydrogenase (quinone) (pyrD), found in Haloarcula marismortui (strain ATCC 43049 / DSM 3752 / JCM 8966 / VKM B-1809) (Halobacterium marismortui).